We begin with the raw amino-acid sequence, 74 residues long: UPF0346 protein SE_1114 (74 aa).

This sequence belongs to the UPF0346 family.

The protein is UPF0346 protein SE_1114 of Staphylococcus epidermidis (strain ATCC 12228 / FDA PCI 1200).